Reading from the N-terminus, the 88-residue chain is Selenoprotein W (88 aa).

A cross-link (cysteinyl-selenocysteine (Cys-Sec); redox-active) is located at residues 10 to 13 (CGAU). Residue selenocysteine 13 is a non-standard amino acid, selenocysteine. Cysteine 37 carries the post-translational modification S-glutathionyl cysteine.

The protein belongs to the SelWTH family. Selenoprotein W subfamily. As to quaternary structure, interacts with DPYSL2, PRDX1, YWHAB, YWHAG, HSP70 and HSP90. In the embryo, expressed in the developing nervous system and in mesoderm-derived tissues such as heart and limbs. In the adult, predominantly expressed in brain, skeletal muscle and heart.

The protein resides in the cytoplasm. Functionally, plays a role as a glutathione (GSH)-dependent antioxidant. May be involved in a redox-related process. May play a role in the myopathies of selenium deficiency. In Mus musculus (Mouse), this protein is Selenoprotein W.